Reading from the N-terminus, the 533-residue chain is Lymphocyte cytosolic protein 2 (533 aa).

Residues 15–81 (WDPDSLADYF…INKNEERRSI (67 aa)) form the SAM domain. Y23 carries the phosphotyrosine modification. The interval 78–417 (RRSIFTRKPQ…PPSPAEEENS (340 aa)) is disordered. The span at 108-155 (FEEDDYESPNDDQDGEDDGDYESPNEEEEAPVEDDADYEPPPSNDEEA) shows a compositional bias: acidic residues. Pro residues predominate over residues 184–213 (QQPPVPPQRPMAALPPPPAGRNHSPLPPPQ). Position 207 is a phosphoserine (S207). 2 stretches are compositionally biased toward polar residues: residues 337–350 (MSSN…TKPS) and 365–376 (SESNSSFPQSAS). S376 and S410 each carry phosphoserine. A compositionally biased stretch (pro residues) spans 400–411 (LPLPNKPRPPSP). The region spanning 422 to 530 (WYVSYITRPE…RYQCTLTHAA (109 aa)) is the SH2 domain.

In terms of assembly, interacts with SLA. Interacts with CBLB. Interacts with GRB2. Interacts with SHB. Interacts with PRAM1. Interacts (via SH2 domain) with CD6 (via tyrosine phosphorylated C-terminus). Interacts with FYB1 and the phosphorylated form of FYB2. Interacts with 14-3-3 adapter/YWHAZ; this phosphorylation leads to YWHAZ proteolytic degradation. Interacts with VAV1; this interaction plays a role in TCR-mediated cytokine production. Interacts with AGER; this interaction plays an important role in AGER-mediated pro-inflammatory responses and cytokine release. Phosphorylated after T-cell receptor activation by ZAP70, ITK and TXK, which leads to the up-regulation of Th1 preferred cytokine IL-2. SYK-dependent phosphorylation is required for recruitment of PI3K signaling components. Highly expressed in spleen, thymus and peripheral blood leukocytes. Highly expressed also in T-cell and monocytic cell lines, expressed at lower level in B-cell lines. Not detected in fibroblast or neuroblastoma cell lines.

It is found in the cytoplasm. Functionally, adapter protein primarily involved in signaling pathways within T-cells, as well as other immune cells such as platelets, mast cells, and natural killer (NK) cells. Plays a crucial role for transducing signal from the T-cell receptor (TCR) after antigen recognition leading to T-cell activation. Mechanistically, once phosphorylated by the kinase ZAP70, mediates interactions with the guanine-nucleotide exchange factor VAV1, the adapter protein NCK and the kinase ITK. In turn, stimulates the activation of PKC-theta/PRKCQ and NF-kappa-B transcriptional activity in response to CD3 and CD28 costimulation. Also plays an essential role in AGER-induced signaling pathways including p38 MAPK and ERK1/2 activation leading to cytokine release and pro-inflammatory responses. This Homo sapiens (Human) protein is Lymphocyte cytosolic protein 2 (LCP2).